The sequence spans 240 residues: Regulatory protein SdiA (240 aa).

The 66-residue stretch at 173–238 (VMTPEMNFSK…QVACYAAATG (66 aa)) folds into the HTH luxR-type domain. The H-T-H motif DNA-binding region spans 197–216 (SAEIAMILSISENTVNFHQK).

Its function is as follows. Activates cell division by specifically increasing transcription from one of the two promoters that lie immediately upstream of the ftsQAZ gene cluster. Activates ydiV expression in response to extracellular autoinducer AI-1 (Vibrio fischeri autoinducer oxoC6). In Escherichia coli (strain K12), this protein is Regulatory protein SdiA (sdiA).